Here is a 190-residue protein sequence, read N- to C-terminus: Vascular endothelial growth factor A (190 aa).

A signal peptide spans 1-26 (MNFLLSWVHWSLALLLYLHHAKWSQA). Cystine bridges form between Cys-51–Cys-93, Cys-82–Cys-127, and Cys-86–Cys-129. Residue Asn-100 is glycosylated (N-linked (GlcNAc...) asparagine).

It belongs to the PDGF/VEGF growth factor family. As to quaternary structure, homodimer; disulfide-linked. Also found as heterodimer with PGF. Interacts with NRP1. Interacts with BSG. Interacts with CD82; this interaction inhibits VEGFA-mediated signaling pathway.

It is found in the secreted. In terms of biological role, growth factor active in angiogenesis, vasculogenesis and endothelial cell growth. Induces endothelial cell proliferation, promotes cell migration, inhibits apoptosis and induces permeabilization of blood vessels. Binds to the FLT1/VEGFR1 and KDR/VEGFR2 receptors, heparan sulfate and heparin. Binding to NRP1 receptor initiates a signaling pathway needed for motor neuron axon guidance and cell body migration, including for the caudal migration of facial motor neurons from rhombomere 4 to rhombomere 6 during embryonic development. Also binds the DEAR/FBXW7-AS1 receptor. This chain is Vascular endothelial growth factor A (VEGFA), found in Bos taurus (Bovine).